We begin with the raw amino-acid sequence, 44 residues long: uncharacterized protein (44 aa).

The segment at 22–44 is disordered; that stretch reads LNSAPAFKSSQNTSTQAKPTFSN.

This is an uncharacterized protein from Dictyostelium discoideum (Social amoeba).